The following is a 149-amino-acid chain: Ribonuclease P protein component (149 aa).

Residues Gly-123–Gly-149 are disordered. A compositionally biased stretch (polar residues) spans Pro-139–Gly-149.

The protein belongs to the RnpA family. In terms of assembly, consists of a catalytic RNA component (M1 or rnpB) and a protein subunit.

It carries out the reaction Endonucleolytic cleavage of RNA, removing 5'-extranucleotides from tRNA precursor.. RNaseP catalyzes the removal of the 5'-leader sequence from pre-tRNA to produce the mature 5'-terminus. It can also cleave other RNA substrates such as 4.5S RNA. The protein component plays an auxiliary but essential role in vivo by binding to the 5'-leader sequence and broadening the substrate specificity of the ribozyme. In Caulobacter vibrioides (strain ATCC 19089 / CIP 103742 / CB 15) (Caulobacter crescentus), this protein is Ribonuclease P protein component.